Here is a 243-residue protein sequence, read N- to C-terminus: Aquaporin SIP1-2 (243 aa).

The next 2 helical transmembrane spans lie at 9–29 (AAAADAVVTFLWVLCVSTLGA) and 45–65 (FALLVTVSLLSVLLFVFNILC). Positions 74–76 (NPT) match the NPA 1 motif. The next 3 helical transmembrane spans lie at 98 to 118 (LPAQAAGAVGGALAISELMPA), 136 to 156 (GAGAELVLTFVITLAVLLIIV), and 163 to 183 (IIKTWMISICTLCLVLSGAAY). An NPA 2 motif is present at residues 189 to 191 (NPA). Residues 211–231 (VYWICPFIGAILAAWIFRAMF) traverse the membrane as a helical segment.

The protein belongs to the MIP/aquaporin (TC 1.A.8) family. SIP (TC 1.A.8.10) subfamily.

It localises to the membrane. Functionally, aquaporins facilitate the transport of water and small neutral solutes across cell membranes. The protein is Aquaporin SIP1-2 (SIP1-2) of Zea mays (Maize).